A 699-amino-acid polypeptide reads, in one-letter code: Tectonic-like complex member Mks1 (699 aa).

Disordered stretches follow at residues 101-121 (RRSPISQHEGEMEKDKNEGEI) and 373-396 (DGFSEEADGEDEQELGDGLPIEED). The span at 108 to 119 (HEGEMEKDKNEG) shows a compositional bias: basic and acidic residues. In terms of domain architecture, C2 B9-type spans 434–560 (KRVSLLLELQ…RLQCIRPLGN (127 aa)). The tract at residues 632 to 661 (LELGNDSSDDGDSNDDDVRSSSNPDTSRAT) is disordered.

Probable component of the tectonic-like complex (also named MKS complex), composed of B9d1, B9d2, Cc2d2a, Mks1 and tctn. In terms of tissue distribution, expressed in chordotonal neurons in the antennae (at protein level). Expressed in spermatids (at protein level).

It is found in the cytoplasm. The protein resides in the cytoskeleton. It localises to the cilium basal body. The protein localises to the microtubule organizing center. Its subcellular location is the centrosome. It is found in the centriole. Functionally, probable component of the tectonic-like complex (also named MKS complex), a complex localized at the transition zone of primary cilia. Required for ciliary structure and function. The sequence is that of Tectonic-like complex member Mks1 from Drosophila melanogaster (Fruit fly).